A 199-amino-acid chain; its full sequence is FMN-dependent NADH:quinone oxidoreductase 2 (199 aa).

FMN contacts are provided by residues Ser10, 16–18 (SVS), and 96–99 (MYNF).

Belongs to the azoreductase type 1 family. In terms of assembly, homodimer. FMN is required as a cofactor.

It catalyses the reaction 2 a quinone + NADH + H(+) = 2 a 1,4-benzosemiquinone + NAD(+). The enzyme catalyses N,N-dimethyl-1,4-phenylenediamine + anthranilate + 2 NAD(+) = 2-(4-dimethylaminophenyl)diazenylbenzoate + 2 NADH + 2 H(+). Quinone reductase that provides resistance to thiol-specific stress caused by electrophilic quinones. In terms of biological role, also exhibits azoreductase activity. Catalyzes the reductive cleavage of the azo bond in aromatic azo compounds to the corresponding amines. The protein is FMN-dependent NADH:quinone oxidoreductase 2 of Pseudomonas fluorescens (strain ATCC BAA-477 / NRRL B-23932 / Pf-5).